Reading from the N-terminus, the 198-residue chain is tRNA (pseudouridine(54)-N(1))-methyltransferase (198 aa).

S-adenosyl-L-methionine is bound by residues L130, G153, 176–181 (LSPLEL), and C186.

This sequence belongs to the methyltransferase superfamily. TrmY family. As to quaternary structure, homodimer.

The protein resides in the cytoplasm. It carries out the reaction pseudouridine(54) in tRNA + S-adenosyl-L-methionine = N(1)-methylpseudouridine(54) in tRNA + S-adenosyl-L-homocysteine + H(+). In terms of biological role, specifically catalyzes the N1-methylation of pseudouridine at position 54 (Psi54) in tRNAs. The protein is tRNA (pseudouridine(54)-N(1))-methyltransferase of Methanococcus maripaludis (strain C5 / ATCC BAA-1333).